The chain runs to 404 residues: Formate-dependent phosphoribosylglycinamide formyltransferase (404 aa).

N(1)-(5-phospho-beta-D-ribosyl)glycinamide-binding positions include 25-26 (EL) and Glu-85. ATP is bound by residues Arg-118, Lys-159, 164-169 (SSGKGQ), 199-202 (EGFI), and Glu-207. The region spanning 123-318 (RLAAEELGLP…EFELHARAIL (196 aa)) is the ATP-grasp domain. Residues Glu-277 and Glu-289 each coordinate Mg(2+). N(1)-(5-phospho-beta-D-ribosyl)glycinamide contacts are provided by residues Asp-296, Lys-365, and 372 to 373 (RR).

The protein belongs to the PurK/PurT family. As to quaternary structure, homodimer.

It carries out the reaction N(1)-(5-phospho-beta-D-ribosyl)glycinamide + formate + ATP = N(2)-formyl-N(1)-(5-phospho-beta-D-ribosyl)glycinamide + ADP + phosphate + H(+). The protein operates within purine metabolism; IMP biosynthesis via de novo pathway; N(2)-formyl-N(1)-(5-phospho-D-ribosyl)glycinamide from N(1)-(5-phospho-D-ribosyl)glycinamide (formate route): step 1/1. Its function is as follows. Involved in the de novo purine biosynthesis. Catalyzes the transfer of formate to 5-phospho-ribosyl-glycinamide (GAR), producing 5-phospho-ribosyl-N-formylglycinamide (FGAR). Formate is provided by PurU via hydrolysis of 10-formyl-tetrahydrofolate. The polypeptide is Formate-dependent phosphoribosylglycinamide formyltransferase (Burkholderia pseudomallei (strain 1106a)).